Here is a 266-residue protein sequence, read N- to C-terminus: rRNA adenine N-6-methyltransferase (266 aa).

S-adenosyl-L-methionine-binding residues include His-14, Thr-16, Gly-41, Glu-62, Asp-87, and Asn-103.

The protein belongs to the class I-like SAM-binding methyltransferase superfamily. rRNA adenine N(6)-methyltransferase family.

In terms of biological role, involved in erythromycin resistance. This Bacteroides fragilis protein is rRNA adenine N-6-methyltransferase (ermFU).